Here is a 193-residue protein sequence, read N- to C-terminus: FMN-dependent NADH:quinone oxidoreductase 1 (193 aa).

FMN-binding positions include Ser-9, 15 to 17 (SIS), and 85 to 88 (MYNF).

It belongs to the azoreductase type 1 family. Homodimer. It depends on FMN as a cofactor.

It catalyses the reaction 2 a quinone + NADH + H(+) = 2 a 1,4-benzosemiquinone + NAD(+). The catalysed reaction is N,N-dimethyl-1,4-phenylenediamine + anthranilate + 2 NAD(+) = 2-(4-dimethylaminophenyl)diazenylbenzoate + 2 NADH + 2 H(+). Its function is as follows. Quinone reductase that provides resistance to thiol-specific stress caused by electrophilic quinones. Functionally, also exhibits azoreductase activity. Catalyzes the reductive cleavage of the azo bond in aromatic azo compounds to the corresponding amines. The protein is FMN-dependent NADH:quinone oxidoreductase 1 of Xanthomonas axonopodis pv. citri (strain 306).